A 572-amino-acid chain; its full sequence is Mitochondrial chaperone TCM62 (572 aa).

A mitochondrion-targeting transit peptide spans 1–16; the sequence is MLRNCLRKLGNHQTKC. The Mitochondrial matrix segment spans residues 17 to 471; that stretch reads SVKTLHTPIY…KANEPNFMTK (455 aa). The helical transmembrane segment at 472 to 488 threads the bilayer; it reads VGINAVLSAVILPSEVA. The Mitochondrial intermembrane portion of the chain corresponds to 489–572; it reads FKNAYGYNYY…VYKKPERHKA (84 aa).

It belongs to the chaperonin (HSP60) family. As to quaternary structure, forms a high molecular mass protein complex of approximately 850 kDa.

Its subcellular location is the mitochondrion inner membrane. In terms of biological role, chaperone. Required for the assembly of succinate dehydrogenase subunits. Ensures mitochondrial gene expression at elevated temperatures and prevents heat-aggregation of the ribosomal subunit VAR1. The chain is Mitochondrial chaperone TCM62 (TCM62) from Saccharomyces cerevisiae (strain ATCC 204508 / S288c) (Baker's yeast).